Consider the following 126-residue polypeptide: Thioredoxin-like 3-3 (126 aa).

The disordered stretch occupies residues 1-24; sequence MRKQESEGANLEFESKSNDNGNVK. The Thioredoxin domain maps to 5–126; sequence ESEGANLEFE…RLHDRLWLHS (122 aa). Catalysis depends on nucleophile residues Cys55 and Cys58. Residues Cys55 and Cys58 are joined by a disulfide bond.

It belongs to the thioredoxin family.

Its function is as follows. Probable thiol-disulfide oxidoreductase that may participate in various redox reactions. The protein is Thioredoxin-like 3-3 of Arabidopsis thaliana (Mouse-ear cress).